Consider the following 378-residue polypeptide: Cytochrome b (378 aa).

The next 4 helical transmembrane spans lie at 34–54 (FGSL…FLAM), 78–99 (WFLR…FIHV), 114–134 (WNTG…GYVL), and 179–199 (FFTF…IHLL). The heme b site is built by His-84 and His-98. Heme b-binding residues include His-183 and His-197. His-202 is a binding site for a ubiquinone. 4 helical membrane-spanning segments follow: residues 227 to 247 (YKDI…IWKF), 289 to 309 (LGGV…PFTH), 321 to 341 (LNQI…WIGA), and 348 to 368 (YILT…INPL).

The protein belongs to the cytochrome b family. In terms of assembly, the main subunits of complex b-c1 are: cytochrome b, cytochrome c1 and the Rieske protein. It depends on heme b as a cofactor.

The protein localises to the mitochondrion inner membrane. Component of the ubiquinol-cytochrome c reductase complex (complex III or cytochrome b-c1 complex) that is part of the mitochondrial respiratory chain. The b-c1 complex mediates electron transfer from ubiquinol to cytochrome c. Contributes to the generation of a proton gradient across the mitochondrial membrane that is then used for ATP synthesis. The polypeptide is Cytochrome b (mt:Cyt-b) (Anopheles gambiae (African malaria mosquito)).